Reading from the N-terminus, the 232-residue chain is Orotate phosphoribosyltransferase (232 aa).

5-phospho-alpha-D-ribose 1-diphosphate is bound by residues Arg-107, Lys-108, Lys-111, His-113, and 133-141 (EDLTTAGGS). An orotate-binding site is contributed by Thr-137.

Belongs to the purine/pyrimidine phosphoribosyltransferase family. PyrE subfamily. As to quaternary structure, homodimer. Requires Mg(2+) as cofactor.

It catalyses the reaction orotidine 5'-phosphate + diphosphate = orotate + 5-phospho-alpha-D-ribose 1-diphosphate. It participates in pyrimidine metabolism; UMP biosynthesis via de novo pathway; UMP from orotate: step 1/2. Its function is as follows. Catalyzes the transfer of a ribosyl phosphate group from 5-phosphoribose 1-diphosphate to orotate, leading to the formation of orotidine monophosphate (OMP). In Agrobacterium fabrum (strain C58 / ATCC 33970) (Agrobacterium tumefaciens (strain C58)), this protein is Orotate phosphoribosyltransferase.